The following is a 189-amino-acid chain: Photosystem I assembly protein Ycf4 (189 aa).

2 helical membrane passes run 25-45 (SVYFWAVALTGGGLGFTLAGL) and 62-82 (LVFIPQGIAMLFYGVLGSLAG).

It belongs to the Ycf4 family.

Its subcellular location is the cellular thylakoid membrane. Functionally, seems to be required for the assembly of the photosystem I complex. This Synechococcus sp. (strain JA-2-3B'a(2-13)) (Cyanobacteria bacterium Yellowstone B-Prime) protein is Photosystem I assembly protein Ycf4.